We begin with the raw amino-acid sequence, 673 residues long: UvrABC system protein B (673 aa).

In terms of domain architecture, Helicase ATP-binding spans 26–414 (EGLEDGLAHQ…GGDVVDQVVR (389 aa)). 39 to 46 (GVTGSGKT) lines the ATP pocket. Residues 92–115 (YYDYYQPEAYVPSSDTFIEKDASV) carry the Beta-hairpin motif. The Helicase C-terminal domain occupies 431–597 (QVDDLLSEIR…GLNKKVVDIL (167 aa)). Residues 633–668 (LQKIHELEGLMMQHAQNLEFEEAAQIRDQLHQLREL) enclose the UVR domain.

Belongs to the UvrB family. As to quaternary structure, forms a heterotetramer with UvrA during the search for lesions. Interacts with UvrC in an incision complex.

It localises to the cytoplasm. Its function is as follows. The UvrABC repair system catalyzes the recognition and processing of DNA lesions. A damage recognition complex composed of 2 UvrA and 2 UvrB subunits scans DNA for abnormalities. Upon binding of the UvrA(2)B(2) complex to a putative damaged site, the DNA wraps around one UvrB monomer. DNA wrap is dependent on ATP binding by UvrB and probably causes local melting of the DNA helix, facilitating insertion of UvrB beta-hairpin between the DNA strands. Then UvrB probes one DNA strand for the presence of a lesion. If a lesion is found the UvrA subunits dissociate and the UvrB-DNA preincision complex is formed. This complex is subsequently bound by UvrC and the second UvrB is released. If no lesion is found, the DNA wraps around the other UvrB subunit that will check the other stand for damage. The sequence is that of UvrABC system protein B from Shigella dysenteriae serotype 1 (strain Sd197).